A 311-amino-acid polypeptide reads, in one-letter code: Ribosomal RNA small subunit methyltransferase A (311 aa).

6 residues coordinate S-adenosyl-L-methionine: N29, V31, G56, E77, D107, and N126.

It belongs to the class I-like SAM-binding methyltransferase superfamily. rRNA adenine N(6)-methyltransferase family. RsmA subfamily.

Its subcellular location is the cytoplasm. The enzyme catalyses adenosine(1518)/adenosine(1519) in 16S rRNA + 4 S-adenosyl-L-methionine = N(6)-dimethyladenosine(1518)/N(6)-dimethyladenosine(1519) in 16S rRNA + 4 S-adenosyl-L-homocysteine + 4 H(+). In terms of biological role, specifically dimethylates two adjacent adenosines (A1518 and A1519) in the loop of a conserved hairpin near the 3'-end of 16S rRNA in the 30S particle. May play a critical role in biogenesis of 30S subunits. The chain is Ribosomal RNA small subunit methyltransferase A from Mycolicibacterium vanbaalenii (strain DSM 7251 / JCM 13017 / BCRC 16820 / KCTC 9966 / NRRL B-24157 / PYR-1) (Mycobacterium vanbaalenii).